We begin with the raw amino-acid sequence, 194 residues long: MMIVIGLTGSIGMGKTTTAKLFAEEGVPVLDSDEVVHGLYRAEAVPLIDAAFPGTTISGMVDRQKLGDVLRKNPANFNRLEEIVHPLVRNRQEAFLAKARIDDRAFALLDIPLLFETGAEGRVDKVVVVSCAPEIQRERVLSRPGMTEEKFEMILARQMPDAEKRQRADFVVDSGNGVEAARDQVKEILQKLGA.

The region spanning 4 to 194 is the DPCK domain; it reads VIGLTGSIGM…VKEILQKLGA (191 aa). 12–17 contributes to the ATP binding site; sequence GMGKTT.

It belongs to the CoaE family.

It is found in the cytoplasm. The catalysed reaction is 3'-dephospho-CoA + ATP = ADP + CoA + H(+). Its pathway is cofactor biosynthesis; coenzyme A biosynthesis; CoA from (R)-pantothenate: step 5/5. Functionally, catalyzes the phosphorylation of the 3'-hydroxyl group of dephosphocoenzyme A to form coenzyme A. This chain is Dephospho-CoA kinase, found in Agrobacterium fabrum (strain C58 / ATCC 33970) (Agrobacterium tumefaciens (strain C58)).